A 257-amino-acid chain; its full sequence is 1-(5-phosphoribosyl)-5-[(5-phosphoribosylamino)methylideneamino] imidazole-4-carboxamide isomerase (257 aa).

Aspartate 8 (proton acceptor) is an active-site residue. The active-site Proton donor is the aspartate 129.

The protein belongs to the HisA/HisF family.

The protein resides in the cytoplasm. It catalyses the reaction 1-(5-phospho-beta-D-ribosyl)-5-[(5-phospho-beta-D-ribosylamino)methylideneamino]imidazole-4-carboxamide = 5-[(5-phospho-1-deoxy-D-ribulos-1-ylimino)methylamino]-1-(5-phospho-beta-D-ribosyl)imidazole-4-carboxamide. It participates in amino-acid biosynthesis; L-histidine biosynthesis; L-histidine from 5-phospho-alpha-D-ribose 1-diphosphate: step 4/9. The polypeptide is 1-(5-phosphoribosyl)-5-[(5-phosphoribosylamino)methylideneamino] imidazole-4-carboxamide isomerase (Thermosynechococcus vestitus (strain NIES-2133 / IAM M-273 / BP-1)).